Consider the following 417-residue polypeptide: Gamma-glutamyl phosphate reductase (417 aa).

It belongs to the gamma-glutamyl phosphate reductase family.

The protein localises to the cytoplasm. The catalysed reaction is L-glutamate 5-semialdehyde + phosphate + NADP(+) = L-glutamyl 5-phosphate + NADPH + H(+). It functions in the pathway amino-acid biosynthesis; L-proline biosynthesis; L-glutamate 5-semialdehyde from L-glutamate: step 2/2. In terms of biological role, catalyzes the NADPH-dependent reduction of L-glutamate 5-phosphate into L-glutamate 5-semialdehyde and phosphate. The product spontaneously undergoes cyclization to form 1-pyrroline-5-carboxylate. In Phocaeicola vulgatus (strain ATCC 8482 / DSM 1447 / JCM 5826 / CCUG 4940 / NBRC 14291 / NCTC 11154) (Bacteroides vulgatus), this protein is Gamma-glutamyl phosphate reductase.